We begin with the raw amino-acid sequence, 45 residues long: Large ribosomal subunit protein bL34 (45 aa).

The segment at 1–27 (MTKRTLGGTSRKRKRVSGFRVRMRTHT) is disordered. Residues 10 to 27 (SRKRKRVSGFRVRMRTHT) show a composition bias toward basic residues.

The protein belongs to the bacterial ribosomal protein bL34 family.

The chain is Large ribosomal subunit protein bL34 from Prochlorococcus marinus (strain MIT 9211).